The primary structure comprises 20 residues: Cuticle-degrading protease-like protein (20 aa).

The segment at 1-20 (AIVEQQGAPXGLGRIINKXK) is disordered.

Belongs to the peptidase S8 family.

The protein resides in the secreted. Its function is as follows. Capable of breaching the insect cuticle. The polypeptide is Cuticle-degrading protease-like protein (Metacordyceps chlamydosporia (Nematophagous fungus)).